We begin with the raw amino-acid sequence, 302 residues long: 2-phosphoglycerate kinase (302 aa).

The region spanning 2–89 (IKVIERDGKV…FWRRFRKLKI (88 aa)) is the ATP-cone domain.

This sequence belongs to the 2-phosphoglycerate kinase family. The cofactor is a divalent metal cation.

The catalysed reaction is (2R)-2-phosphoglycerate + ATP = (2R)-2,3-bisphosphoglycerate + ADP + H(+). The protein operates within thermoadapter biosynthesis; cyclic 2,3-diphosphoglycerate biosynthesis; cyclic 2,3-diphosphoglycerate from 2-phospho-D-glycerate: step 1/2. Its function is as follows. Catalyzes the phosphorylation of 2-phosphoglycerate to 2,3-diphosphoglycerate. Involved in the biosynthesis of cyclic 2,3-bisphosphoglycerate, a thermoprotectant. This Pyrococcus furiosus (strain ATCC 43587 / DSM 3638 / JCM 8422 / Vc1) protein is 2-phosphoglycerate kinase.